The primary structure comprises 61 residues: MKIHVFLFVLFFFLVPIATRVKCAVKDTYSCFIMRGKCRHECHDFEKPIGFCTKLNANCYM.

The first 23 residues, 1 to 23 (MKIHVFLFVLFFFLVPIATRVKC), serve as a signal peptide directing secretion. Disulfide bonds link cysteine 31–cysteine 59 and cysteine 38–cysteine 52.

This sequence belongs to the beta-defensin family.

The protein resides in the secreted. Functionally, has antibacterial activity. The chain is Beta-defensin 133 (DEFB133) from Homo sapiens (Human).